Reading from the N-terminus, the 158-residue chain is Ribosome maturation factor RimP (158 aa).

Belongs to the RimP family.

It localises to the cytoplasm. Its function is as follows. Required for maturation of 30S ribosomal subunits. The chain is Ribosome maturation factor RimP from Streptococcus suis (strain 05ZYH33).